Consider the following 329-residue polypeptide: Glycerol-3-phosphate dehydrogenase [NAD(P)+] (329 aa).

Positions 13, 14, 34, and 105 each coordinate NADPH. Positions 105, 134, and 136 each coordinate sn-glycerol 3-phosphate. Residue Ala138 coordinates NADPH. The sn-glycerol 3-phosphate site is built by Lys189, Asp242, Ser252, Arg253, and Asn254. Lys189 functions as the Proton acceptor in the catalytic mechanism. Residue Arg253 coordinates NADPH. 2 residues coordinate NADPH: Val277 and Glu279.

It belongs to the NAD-dependent glycerol-3-phosphate dehydrogenase family.

It is found in the cytoplasm. The catalysed reaction is sn-glycerol 3-phosphate + NAD(+) = dihydroxyacetone phosphate + NADH + H(+). It catalyses the reaction sn-glycerol 3-phosphate + NADP(+) = dihydroxyacetone phosphate + NADPH + H(+). It functions in the pathway membrane lipid metabolism; glycerophospholipid metabolism. Functionally, catalyzes the reduction of the glycolytic intermediate dihydroxyacetone phosphate (DHAP) to sn-glycerol 3-phosphate (G3P), the key precursor for phospholipid synthesis. The chain is Glycerol-3-phosphate dehydrogenase [NAD(P)+] from Legionella pneumophila subsp. pneumophila (strain Philadelphia 1 / ATCC 33152 / DSM 7513).